Consider the following 140-residue polypeptide: Cysteine desulfuration protein SufE (140 aa).

The active-site Cysteine persulfide intermediate is the cysteine 51.

It belongs to the SufE family. As to quaternary structure, homodimer. Interacts with SufS.

It is found in the cytoplasm. It participates in cofactor biosynthesis; iron-sulfur cluster biosynthesis. In terms of biological role, participates in cysteine desulfuration mediated by SufS. Cysteine desulfuration mobilizes sulfur from L-cysteine to yield L-alanine and constitutes an essential step in sulfur metabolism for biosynthesis of a variety of sulfur-containing biomolecules. Functions as a sulfur acceptor for SufS, by mediating the direct transfer of the sulfur atom from the S-sulfanylcysteine of SufS, an intermediate product of cysteine desulfuration process. The polypeptide is Cysteine desulfuration protein SufE (Yersinia pseudotuberculosis serotype O:1b (strain IP 31758)).